A 111-amino-acid chain; its full sequence is Large ribosomal subunit protein uL22 (111 aa).

It belongs to the universal ribosomal protein uL22 family. As to quaternary structure, part of the 50S ribosomal subunit.

In terms of biological role, this protein binds specifically to 23S rRNA; its binding is stimulated by other ribosomal proteins, e.g. L4, L17, and L20. It is important during the early stages of 50S assembly. It makes multiple contacts with different domains of the 23S rRNA in the assembled 50S subunit and ribosome. Its function is as follows. The globular domain of the protein is located near the polypeptide exit tunnel on the outside of the subunit, while an extended beta-hairpin is found that lines the wall of the exit tunnel in the center of the 70S ribosome. This Clostridium kluyveri (strain NBRC 12016) protein is Large ribosomal subunit protein uL22.